A 262-amino-acid polypeptide reads, in one-letter code: uncharacterized protein (262 aa).

The protein belongs to the BtpA family.

This is an uncharacterized protein from Pyrococcus furiosus (strain ATCC 43587 / DSM 3638 / JCM 8422 / Vc1).